The chain runs to 326 residues: DNA-directed RNA polymerase subunit alpha (326 aa).

The interval 1 to 232 (MQSATEFLKP…SQLSVFADLE (232 aa)) is alpha N-terminal domain (alpha-NTD). The interval 246 to 326 (VDPLLLRPVD…NWPPAGLERP (81 aa)) is alpha C-terminal domain (alpha-CTD).

It belongs to the RNA polymerase alpha chain family. In terms of assembly, homodimer. The RNAP catalytic core consists of 2 alpha, 1 beta, 1 beta' and 1 omega subunit. When a sigma factor is associated with the core the holoenzyme is formed, which can initiate transcription.

The enzyme catalyses RNA(n) + a ribonucleoside 5'-triphosphate = RNA(n+1) + diphosphate. DNA-dependent RNA polymerase catalyzes the transcription of DNA into RNA using the four ribonucleoside triphosphates as substrates. This chain is DNA-directed RNA polymerase subunit alpha, found in Thiobacillus denitrificans (strain ATCC 25259 / T1).